The primary structure comprises 229 residues: MAKKKAFIPFFYFTSIVFLPWVISLCCNKSLKIWITNWWNTRQCETFLNDIKEKSVLEKFIQLENLFQLDEMIKEYPETDLQQFRLGIHKETIQFIKIHNEYHIHTILHFSTNLISFVILSGYSFWGKEKLFILNSWVQEFLYNLSDTIKAFSILLLTDLCIGFHSPHGWELMIGYIYKDFGFAHYEQILSGLVSTFPVILDTIFKYWIFRYLNRVSPSLVVIYHAIND.

The next 3 membrane-spanning stretches (helical) occupy residues 6–26 (AFIPFFYFTSIVFLPWVISLC), 107–127 (ILHFSTNLISFVILSGYSFWG), and 189–209 (ILSGLVSTFPVILDTIFKYWI).

The protein belongs to the CemA family.

Its subcellular location is the plastid. The protein resides in the chloroplast inner membrane. The enzyme catalyses K(+)(in) + H(+)(out) = K(+)(out) + H(+)(in). In terms of biological role, contributes to K(+)/H(+) antiport activity by supporting proton efflux to control proton extrusion and homeostasis in chloroplasts in a light-dependent manner to modulate photosynthesis. Prevents excessive induction of non-photochemical quenching (NPQ) under continuous-light conditions. Indirectly promotes efficient inorganic carbon uptake into chloroplasts. In Draba nemorosa (Woodland whitlowgrass), this protein is Potassium/proton antiporter CemA.